A 282-amino-acid polypeptide reads, in one-letter code: Follicle cell protein 3C-1 (282 aa).

Residues 103 to 156 form a disordered region; sequence EASTETIGNNGTTETTVGEAPIIGSSEGSTRSMEPTTASPLMSTNPSSSSSLVS. Over residues 106-118 the composition is skewed to low complexity; the sequence is TETIGNNGTTETT. Over residues 128-140 the composition is skewed to polar residues; sequence SEGSTRSMEPTTA. The span at 141-156 shows a compositional bias: low complexity; that stretch reads SPLMSTNPSSSSSLVS.

In terms of tissue distribution, expressed in follicle cells during vitelline membrane formation.

The sequence is that of Follicle cell protein 3C-1 (Fcp3C) from Drosophila melanogaster (Fruit fly).